A 396-amino-acid chain; its full sequence is DNA polymerase IV (396 aa).

The region spanning 2 to 182 is the UmuC domain; that stretch reads ILHVDMDAFY…LPVSRLWGVG (181 aa). The Mg(2+) site is built by Asp-6 and Asp-100. Glu-101 is an active-site residue.

It belongs to the DNA polymerase type-Y family. As to quaternary structure, monomer. Mg(2+) serves as cofactor.

It localises to the cytoplasm. The enzyme catalyses DNA(n) + a 2'-deoxyribonucleoside 5'-triphosphate = DNA(n+1) + diphosphate. Its function is as follows. Poorly processive, error-prone DNA polymerase involved in untargeted mutagenesis. Copies undamaged DNA at stalled replication forks, which arise in vivo from mismatched or misaligned primer ends. These misaligned primers can be extended by PolIV. Exhibits no 3'-5' exonuclease (proofreading) activity. May be involved in translesional synthesis, in conjunction with the beta clamp from PolIII. The sequence is that of DNA polymerase IV from Rhodopirellula baltica (strain DSM 10527 / NCIMB 13988 / SH1).